We begin with the raw amino-acid sequence, 218 residues long: Small ribosomal subunit protein uS3 (218 aa).

The region spanning 38–106 (IREYLTKRLS…RVHINIVEIK (69 aa)) is the KH type-2 domain.

The protein belongs to the universal ribosomal protein uS3 family. In terms of assembly, part of the 30S ribosomal subunit. Forms a tight complex with proteins S10 and S14.

In terms of biological role, binds the lower part of the 30S subunit head. Binds mRNA in the 70S ribosome, positioning it for translation. This is Small ribosomal subunit protein uS3 from Anoxybacillus flavithermus (strain DSM 21510 / WK1).